Reading from the N-terminus, the 494-residue chain is Nuclear distribution protein PAC1 (494 aa).

The LisH domain maps to 14 to 46 (QKNELDKSVLRYLNWNYKQTVRHEHAQDYESVR). Residues 90-123 (NSIVRLQKKIIELEQNTETLVSQIKDLNTQVSEL) are a coiled coil. WD repeat units follow at residues 153–192 (NVES…IPLA), 196–244 (SHTK…CKFQ), 251–292 (GHEH…SLKT), 295–334 (PHSQ…SVGT), 347–395 (HFIE…LMAH), 415–454 (GHLS…HVWE), and 457–492 (HTGF…SNVF).

This sequence belongs to the WD repeat LIS1/nudF family. In terms of assembly, self-associates. Interacts with NDL1 and dynein.

The protein localises to the cytoplasm. It is found in the cytoskeleton. Its subcellular location is the spindle pole. Its function is as follows. Positively regulates the activity of the minus-end directed microtubule motor protein dynein. Plays a central role in positioning the mitotic spindle at the bud neck during cell division. Targets cytoplasmic dynein to microtubule plus ends, thereby promoting dynein-mediated microtubule sliding along the bud cortex and consequently the movement of the mitotic spindle to the bud neck. The protein is Nuclear distribution protein PAC1 of Saccharomyces cerevisiae (strain RM11-1a) (Baker's yeast).